Consider the following 122-residue polypeptide: Large ribosomal subunit protein uL14 (122 aa).

Belongs to the universal ribosomal protein uL14 family. As to quaternary structure, part of the 50S ribosomal subunit. Forms a cluster with proteins L3 and L19. In the 70S ribosome, L14 and L19 interact and together make contacts with the 16S rRNA in bridges B5 and B8.

In terms of biological role, binds to 23S rRNA. Forms part of two intersubunit bridges in the 70S ribosome. The protein is Large ribosomal subunit protein uL14 of Campylobacter jejuni subsp. jejuni serotype O:6 (strain 81116 / NCTC 11828).